The following is a 634-amino-acid chain: DNA-directed RNA polymerase subunit gamma (634 aa).

C74, C76, C89, and C92 together coordinate Zn(2+). Mg(2+)-binding residues include D471, D473, and D475.

The protein belongs to the RNA polymerase beta' chain family. RpoC1 subfamily. As to quaternary structure, in cyanobacteria the RNAP catalytic core is composed of 2 alpha, 1 beta, 1 beta', 1 gamma and 1 omega subunit. When a sigma factor is associated with the core the holoenzyme is formed, which can initiate transcription. Mg(2+) is required as a cofactor. The cofactor is Zn(2+).

The enzyme catalyses RNA(n) + a ribonucleoside 5'-triphosphate = RNA(n+1) + diphosphate. Its function is as follows. DNA-dependent RNA polymerase catalyzes the transcription of DNA into RNA using the four ribonucleoside triphosphates as substrates. This chain is DNA-directed RNA polymerase subunit gamma, found in Synechococcus sp. (strain WH7803).